The chain runs to 480 residues: Major capsid protein (480 aa).

The protein localises to the virion. Major protein of the capsid. The polypeptide is Major capsid protein (MCP-1) (Trichoplusia ni ascovirus 2c (TnAV-2c)).